The primary structure comprises 293 residues: HTH-type transcriptional regulator HdfR (293 aa).

In terms of domain architecture, HTH lysR-type spans 1 to 58 (MDTELLKTFLEVSRTRHFGRAAESLYLTQSAVSFRIRQLENQLGANLFTRHRNNIRLT). The H-T-H motif DNA-binding region spans 18–37 (FGRAAESLYLTQSAVSFRIR).

The protein belongs to the LysR transcriptional regulatory family.

Functionally, negatively regulates the transcription of the flagellar master operon flhDC by binding to the upstream region of the operon. The protein is HTH-type transcriptional regulator HdfR of Yersinia enterocolitica serotype O:8 / biotype 1B (strain NCTC 13174 / 8081).